The sequence spans 165 residues: Destrin (165 aa).

Residue A2 is modified to N-acetylalanine. The residue at position 3 (S3) is a Phosphoserine. In terms of domain architecture, ADF-H spans 4–153 (GVQVADEVCR…NRTCIAEKLG (150 aa)). K19 is subject to N6-acetyllysine. Residues 30–34 (KKRKK) carry the Nuclear localization signal motif.

Belongs to the actin-binding proteins ADF family. ISGylated. Widely expressed. Not found in skeletal muscle.

Actin-depolymerizing protein. Severs actin filaments (F-actin) and binds to actin monomers (G-actin). Acts in a pH-independent manner. This chain is Destrin (Dstn), found in Mus musculus (Mouse).